Consider the following 218-residue polypeptide: Glutathione S-transferase (218 aa).

Positions 3 to 88 (SKPVLGYWDI…YIGRKYKLTG (86 aa)) constitute a GST N-terminal domain. Residues 9 to 10 (YW), 43 to 46 (RSAW), Lys50, 59 to 60 (NL), and 72 to 73 (QT) contribute to the glutathione site. Positions 90–206 (NEPEELRVSL…YIKAQQPKLF (117 aa)) constitute a GST C-terminal domain. A substrate-binding site is contributed by Tyr116.

It belongs to the GST superfamily. Mu family.

The catalysed reaction is RX + glutathione = an S-substituted glutathione + a halide anion + H(+). Conjugation of reduced glutathione to a wide number of exogenous and endogenous hydrophobic electrophiles. This Tyrophagus putrescentiae (Mold mite) protein is Glutathione S-transferase.